Reading from the N-terminus, the 132-residue chain is MEVWGGKSYFKVEFVDNPKKIVKSWREKGGLVVHLTMYGKMIDDMIDEITKASKNFTLPLLVVIGSEKVEGWYYYNSDYNIGIGNQPHSEVSALAIFLDRIYKGEELYIHFSDAKFYIIPQLKGKRVVKTDK.

S-adenosyl-L-methionine contacts are provided by residues L35, 65-69 (GSEKV), and 83-90 (IGNQPHSE).

It belongs to the aTrm56 family. As to quaternary structure, homodimer.

The protein localises to the cytoplasm. It carries out the reaction cytidine(56) in tRNA + S-adenosyl-L-methionine = 2'-O-methylcytidine(56) in tRNA + S-adenosyl-L-homocysteine + H(+). Specifically catalyzes the AdoMet-dependent 2'-O-ribose methylation of cytidine at position 56 in tRNAs. This is tRNA (cytidine(56)-2'-O)-methyltransferase from Sulfolobus acidocaldarius (strain ATCC 33909 / DSM 639 / JCM 8929 / NBRC 15157 / NCIMB 11770).